We begin with the raw amino-acid sequence, 100 residues long: NAD(P)H-quinone oxidoreductase subunit 4L, chloroplastic (100 aa).

3 helical membrane-spanning segments follow: residues 1–21 (MLEH…YGLI), 31–51 (MCLE…SDFF), and 60–80 (IFSI…PAIL).

The protein belongs to the complex I subunit 4L family. In terms of assembly, NDH is composed of at least 16 different subunits, 5 of which are encoded in the nucleus.

The protein resides in the plastid. It is found in the chloroplast thylakoid membrane. It catalyses the reaction a plastoquinone + NADH + (n+1) H(+)(in) = a plastoquinol + NAD(+) + n H(+)(out). It carries out the reaction a plastoquinone + NADPH + (n+1) H(+)(in) = a plastoquinol + NADP(+) + n H(+)(out). NDH shuttles electrons from NAD(P)H:plastoquinone, via FMN and iron-sulfur (Fe-S) centers, to quinones in the photosynthetic chain and possibly in a chloroplast respiratory chain. The immediate electron acceptor for the enzyme in this species is believed to be plastoquinone. Couples the redox reaction to proton translocation, and thus conserves the redox energy in a proton gradient. This Cucumis sativus (Cucumber) protein is NAD(P)H-quinone oxidoreductase subunit 4L, chloroplastic.